The chain runs to 106 residues: Large ribosomal subunit protein uL24 (106 aa).

This sequence belongs to the universal ribosomal protein uL24 family. As to quaternary structure, part of the 50S ribosomal subunit.

In terms of biological role, one of two assembly initiator proteins, it binds directly to the 5'-end of the 23S rRNA, where it nucleates assembly of the 50S subunit. Its function is as follows. One of the proteins that surrounds the polypeptide exit tunnel on the outside of the subunit. This is Large ribosomal subunit protein uL24 from Syntrophus aciditrophicus (strain SB).